The chain runs to 734 residues: Sulfate transporter (734 aa).

Residues 1 to 18 (MSLKNEDQNDLSPKDSVK) are compositionally biased toward basic and acidic residues. A disordered region spans residues 1–38 (MSLKNEDQNDLSPKDSVKGNDQYRAPSGIHLEPEEESR). A phosphoserine mark is found at Ser12 and Ser16. 2 consecutive transmembrane segments (helical) span residues 113–133 (VMSGLIVGILLVPQSIAYSLL) and 138–158 (PIYGLYTSFFASLIYFILGTS). Asn194 is a glycosylation site (N-linked (GlcNAc...) asparagine). 6 helical membrane-spanning segments follow: residues 214–234 (IIVGSTVTFVAGVYQVAMGFF), 237–257 (GFVSVYLSDALLGGFVTGASF), 379–399 (VDAIAIAIIGFAITVSLSEMF), 415–435 (AIGFCNIIPSFFHCFTTSAAL), 453–473 (VMTALVLLLVLLVIAPLFFSL), and 519–539 (LISTEIGLLTGVCFSMFCVIL). One can recognise an STAS domain in the interval 563–714 (AYKNLQAKSG…YSIYEAMTFA (152 aa)).

This sequence belongs to the SLC26A/SulP transporter (TC 2.A.53) family. N-glycosylated.

The protein localises to the cell membrane. It is found in the apical cell membrane. It carries out the reaction oxalate(in) + sulfate(out) = oxalate(out) + sulfate(in). It catalyses the reaction sulfate(out) + 2 chloride(in) = sulfate(in) + 2 chloride(out). The enzyme catalyses oxalate(out) + 2 chloride(in) = oxalate(in) + 2 chloride(out). The catalysed reaction is bromide(in) + chloride(out) = bromide(out) + chloride(in). It carries out the reaction nitrate(in) + chloride(out) = nitrate(out) + chloride(in). It catalyses the reaction iodide(in) + chloride(out) = iodide(out) + chloride(in). Its function is as follows. Sulfate transporter which mediates sulfate uptake into chondrocytes in order to maintain adequate sulfation of proteoglycans which is needed for cartilage development. Mediates electroneutral anion exchange of sulfate ions for oxalate ions, sulfate and oxalate ions for chloride and/or hydroxyl ions and chloride ions for bromide, iodide and nitrate ions. The coupling of sulfate transport to both hydroxyl and chloride ions likely serves to ensure transport at both acidic pH when most sulfate uptake is mediated by sulfate-hydroxide exchange and alkaline pH when most sulfate uptake is mediated by sulfate-chloride exchange. Essential for chondrocyte proliferation, differentiation and cell size expansion. In Bos taurus (Bovine), this protein is Sulfate transporter (SLC26A2).